The sequence spans 349 residues: [LysW]-L-2-aminoadipate/[LysW]-L-glutamate phosphate reductase (349 aa).

10–13 is an NADP(+) binding site; that stretch reads SGYT. Cysteine 150 is a catalytic residue. Residue asparagine 316 coordinates NADP(+).

It belongs to the NAGSA dehydrogenase family. Type 1 subfamily. LysY sub-subfamily.

It localises to the cytoplasm. It catalyses the reaction [amino-group carrier protein]-C-terminal-N-(1-carboxy-5-oxopentan-1-yl)-L-glutamine + phosphate + NADP(+) = [amino-group carrier protein]-C-terminal-N-(1-carboxy-5-phosphooxy-5-oxopentan-1-yl)-L-glutamine + NADPH + H(+). The enzyme catalyses [amino-group carrier protein]-C-terminal-gamma-(L-glutamyl-5-semialdehyde)-L-glutamate + phosphate + NADP(+) = [amino-group carrier protein]-C-terminal-gamma-(5-phospho-L-glutamyl)-L-glutamate + NADPH + H(+). Its pathway is amino-acid biosynthesis; L-lysine biosynthesis via AAA pathway; L-lysine from L-alpha-aminoadipate (Thermus route): step 3/5. The protein operates within amino-acid biosynthesis; L-arginine biosynthesis. Involved in both the arginine and lysine biosynthetic pathways. The protein is [LysW]-L-2-aminoadipate/[LysW]-L-glutamate phosphate reductase of Sulfurisphaera tokodaii (strain DSM 16993 / JCM 10545 / NBRC 100140 / 7) (Sulfolobus tokodaii).